A 1320-amino-acid polypeptide reads, in one-letter code: MSRRKQAKPQHLKSDEELPPQDGASEHGVPGDGAEDADSGSESRSGSEETSVCEKCCAEFFKWADFLQHKKTCTKNPLVLIVHDDEPAPPSEDFPEPSPASSPSDRTESEVAEEVAPTEGSEVKAATKEAEPMDVEVSTDKGPPGPSVPPPPPALPPQPEPAAFSMPSTNVTLETLLSTKVAVAQFSQGARAGGTTGAGGSVGAVAIPMILEQLVALQQQQIHQLQLIEQIRSQVALMSRQPGPPLKPSASAPGTASVQLQGLTPHAALQLSAGPATASAGSGSTLPAAFDGPQHLSQPASGTSTPCSTSAAPPDSGAHPACSTGPAPGAVAAASSTVGNAVQPQNASTPPALGPGPLLSSASNLPNPLLPQTSSSSVIFPNPLVSIAATANALDPLSALMKHRKGKPPNVSVFEPKASAEDPFFKHKCRFCAKVFGSDSALQIHLRSHTGERPFKCNICGNRFSTKGNLKVHFQRHKEKYPHIQMNPYPVPEYLDNVPTCSGIPYGMSLPPEKPVTTWLDSKPVLPTVPTSVGLQLPPTVPGTHNYTDSPSITPVSRSPQRPSPASSECTSLSPGLNNTESGITVRPESPQPLLGGPSLTKAEPVSLPCTSTRTGDAPVVGGQVSGLPTSAATAVTDSACTSLGSPGLPAVSDQFKAQFPFGGLLDSMQTSETSKLQQLVENIDKKMTDPNQCVICHRVLSCQSALKMHYRTHTGERPFKCKICGRAFTTKGNLKTHFGVHRAKPPLRVQHSCPICQKKFTNAVVLQQHIRMHMGGQIPNTPLPEGLQEAMDADLPFDEKNAETLSSFDDDIDENSMEEDSELKDTASDSSKPLLSYSGSCPPSPPSVISSIAALENQMKMIDSVMNCQQLANLKSVENGSGESDRLSNDSSSAVGDLESRSAGSPALSESSSSQALSPAHSNGESFRSKSPGLGHQEDPQEIPLKTERLDSPPPGPGNGGALDLTAGHPGRPLIKEEAPFSLLFLSRERGKCASTVCGVCGKPFACKSALEIHYRSHTKERRFVCTVCRRGCSTMGNLKQHLLTHKLKELPSQVFDPNFTLGPSHSTPSLASSPAPTMIKMEVNGHSKAIALGEGPALPAGVQVPTGPQTVMSPGLAPMLAPPPRRTPKQHNCQSCGKTFSSASALQIHERTHTGEKPFGCTICGRAFTTKGNLKVHMGTHMWNNAPARRGRRLSVENPMALLGGDALKFSEMFQKDLAARAMNVDPSFWNQYAAAITNGLAMKNNEISVIQNGGIPQLPVSLGGGAIPPLGAMASGVDKARTGSSPPIVSLDKASSETGASRPFARFIEDNKEIGIN.

Positions 1 to 11 are enriched in basic residues; that stretch reads MSRRKQAKPQH. A disordered region spans residues 1–49; the sequence is MSRRKQAKPQHLKSDEELPPQDGASEHGVPGDGAEDADSGSESRSGSEE. Over residues 40 to 49 the composition is skewed to low complexity; the sequence is GSESRSGSEE. A C2H2-type 1; atypical zinc finger spans residues 51–73; the sequence is SVCEKCCAEFFKWADFLQHKKTC. 2 disordered regions span residues 84–166 and 271–367; these read DDEP…AFSM and LSAG…NLPN. A compositionally biased stretch (pro residues) spans 88–100; that stretch reads APPSEDFPEPSPA. S109 bears the Phosphoserine mark. The span at 121-131 shows a compositional bias: basic and acidic residues; sequence SEVKAATKEAE. Positions 143-160 are enriched in pro residues; it reads PPGPSVPPPPPALPPQPE. Positions 271 to 289 are enriched in low complexity; sequence LSAGPATASAGSGSTLPAA. Residues 295–311 are compositionally biased toward polar residues; the sequence is HLSQPASGTSTPCSTSA. Low complexity-rich tracts occupy residues 323 to 342 and 355 to 367; these read STGP…GNAV and PGPL…NLPN. 2 consecutive C2H2-type zinc fingers follow at residues 427–449 and 455–477; these read HKCR…LRSH and FKCN…FQRH. Residues 534–623 form a disordered region; sequence GLQLPPTVPG…RTGDAPVVGG (90 aa). Residues 543–554 show a composition bias toward polar residues; that stretch reads GTHNYTDSPSIT. Residues 555–568 are compositionally biased toward low complexity; sequence PVSRSPQRPSPASS. Residues 569–583 show a composition bias toward polar residues; the sequence is ECTSLSPGLNNTESG. 3 consecutive C2H2-type zinc fingers follow at residues 692-714, 720-742, and 752-774; these read NQCV…YRTH, FKCK…FGVH, and HSCP…IRMH. Disordered stretches follow at residues 807–846 and 878–972; these read SSFD…PPSP and VENG…GHPG. Acidic residues predominate over residues 809–823; the sequence is FDDDIDENSMEEDSE. Low complexity-rich tracts occupy residues 834-846 and 902-923; these read PLLS…PPSP and RSAG…PAHS. Position 932 is a phosphoserine (S932). 4 C2H2-type zinc fingers span residues 997-1019, 1025-1047, 1133-1155, and 1161-1183; these read TVCG…YRSH, FVCT…LLTH, HNCQ…ERTH, and FGCT…MGTH. S1197 is subject to Phosphoserine.

Belongs to the sal C2H2-type zinc-finger protein family. In adult brain, testis and kidney. In lower levels also in adult ovaries and embryonic stem cells. In embryo in developing neuroectoderm of brain, inner ear and spinal cord. Also weakly and transiently expressed in embryonic branchial arches, notochord, limb buds and heart.

It localises to the nucleus. Functionally, probable transcription factor. This Mus musculus (Mouse) protein is Sal-like protein 3 (Sall3).